Consider the following 152-residue polypeptide: Deoxyuridine 5'-triphosphate nucleotidohydrolase (152 aa).

Residues 72-74, Asn85, and 89-91 each bind substrate; these read RSG and TVD.

It belongs to the dUTPase family. It depends on Mg(2+) as a cofactor.

The catalysed reaction is dUTP + H2O = dUMP + diphosphate + H(+). It functions in the pathway pyrimidine metabolism; dUMP biosynthesis; dUMP from dCTP (dUTP route): step 2/2. This enzyme is involved in nucleotide metabolism: it produces dUMP, the immediate precursor of thymidine nucleotides and it decreases the intracellular concentration of dUTP so that uracil cannot be incorporated into DNA. This chain is Deoxyuridine 5'-triphosphate nucleotidohydrolase, found in Nitrobacter winogradskyi (strain ATCC 25391 / DSM 10237 / CIP 104748 / NCIMB 11846 / Nb-255).